Here is a 132-residue protein sequence, read N- to C-terminus: Small ribosomal subunit protein uS8 (132 aa).

This sequence belongs to the universal ribosomal protein uS8 family. As to quaternary structure, part of the 30S ribosomal subunit. Contacts proteins S5 and S12.

In terms of biological role, one of the primary rRNA binding proteins, it binds directly to 16S rRNA central domain where it helps coordinate assembly of the platform of the 30S subunit. The protein is Small ribosomal subunit protein uS8 of Xanthobacter autotrophicus (strain ATCC BAA-1158 / Py2).